The primary structure comprises 232 residues: Uracil-DNA glycosylase (232 aa).

Asp-64 functions as the Proton acceptor in the catalytic mechanism.

It belongs to the uracil-DNA glycosylase (UDG) superfamily. UNG family.

It is found in the cytoplasm. It catalyses the reaction Hydrolyzes single-stranded DNA or mismatched double-stranded DNA and polynucleotides, releasing free uracil.. In terms of biological role, excises uracil residues from the DNA which can arise as a result of misincorporation of dUMP residues by DNA polymerase or due to deamination of cytosine. The chain is Uracil-DNA glycosylase from Shouchella clausii (strain KSM-K16) (Alkalihalobacillus clausii).